The sequence spans 3351 residues: Apolipophorins (3351 aa).

The N-terminal stretch at 1–25 (MARMKYNIALIGILASVLLTIAVNA) is a signal peptide. The 599-residue stretch at 43–641 (YIPGNYYDYS…SQHGFLPRSS (599 aa)) folds into the Vitellogenin domain. N-linked (GlcNAc...) asparagine glycosylation is found at Asn67, Asn644, Asn1514, Asn1744, Asn1932, Asn1979, and Asn2822. The VWFD domain maps to 2786–2952 (LRGHVVDGKH…DYGVGKCTAI (167 aa)).

As to quaternary structure, interacts with Nrx-1 (via cytoplasmic domain); the interaction supports apolpp/ApoLI protein stability. Post-translationally, may be modified covalently by lipidation. In terms of processing, cleaved into 2 chains by furin protease. However, prevention of cleavage does not impair its function. In terms of tissue distribution, during stage 12, it is highly present throughout the yolk sac. By late stage 14, it localizes in the lateral fat body cells. Starting at stage 14, it localizes to the apodemes. Component of hemolymph clots (at protein level). Expressed in the amniosera. Expressed in rhabdomere of photoreceptor cells in retina (at protein level). As to expression, expressed in rhabdomere of photoreceptor cells in retina (at protein level). Expressed in simper cells as well as interphotoreceptor matrix (at protein level).

Its subcellular location is the secreted. It is found in the cell projection. The protein localises to the rhabdomere. Its function is as follows. Constitutes the major component of lipophorin, which mediates transport for various types of lipids in hemolymph. Acts by forming lipoprotein particles that bind lipoproteins and lipids. Also involved in the transport of hydrophobic ligands like juvenile hormones, pheromone hydrocarbons and carotenoids. Required for morphogens wingless (wg) and hedgehog (hh) function, probably by acting as vehicles for the movement of wg and hh, explaining how covalently lipidated wg and hh can spread over long distances. May also be involved in transport and/or metabolism of heme. Involved in yolk granule formation. May be a component of yolk incorporated into yolk granules via yl/yolkless-mediated endocytosis and the endolysosomal pathway. In Drosophila melanogaster (Fruit fly), this protein is Apolipophorins.